The chain runs to 351 residues: UDP-3-O-acylglucosamine N-acyltransferase (351 aa).

H240 acts as the Proton acceptor in catalysis.

The protein belongs to the transferase hexapeptide repeat family. LpxD subfamily. In terms of assembly, homotrimer.

It catalyses the reaction a UDP-3-O-[(3R)-3-hydroxyacyl]-alpha-D-glucosamine + a (3R)-hydroxyacyl-[ACP] = a UDP-2-N,3-O-bis[(3R)-3-hydroxyacyl]-alpha-D-glucosamine + holo-[ACP] + H(+). The protein operates within bacterial outer membrane biogenesis; LPS lipid A biosynthesis. Its function is as follows. Catalyzes the N-acylation of UDP-3-O-acylglucosamine using 3-hydroxyacyl-ACP as the acyl donor. Is involved in the biosynthesis of lipid A, a phosphorylated glycolipid that anchors the lipopolysaccharide to the outer membrane of the cell. The protein is UDP-3-O-acylglucosamine N-acyltransferase of Pseudomonas fluorescens (strain ATCC BAA-477 / NRRL B-23932 / Pf-5).